The following is a 595-amino-acid chain: Cardiolipin synthase (CMP-forming) / mitochondrial hydrolase fusion protein (595 aa).

Residues 1–24 constitute a mitochondrion transit peptide; it reads MLHTINYRSWHLAARQLGRSTFRK. Transmembrane regions (helical) follow at residues 538-560 and 564-586; these read ALQL…ASFA and LFYI…RNTF.

The protein in the N-terminal section; belongs to the HAD-like hydrolase superfamily. In the C-terminal section; belongs to the CDP-alcohol phosphatidyltransferase class-I family. The cofactor is Mg(2+). Proteolytically cleaved, presumably during its import into the mitochondrion by mitochondrial processing peptidase.

The protein localises to the mitochondrion. It is found in the mitochondrion inner membrane. The catalysed reaction is a CDP-1,2-diacyl-sn-glycerol + a 1,2-diacyl-sn-glycero-3-phospho-(1'-sn-glycerol) = a cardiolipin + CMP + H(+). Functionally, catalyzes the synthesis of cardiolipin (CL) (diphosphatidylglycerol) by specifically transferring a phosphatidyl group from CDP-diacylglycerol to phosphatidylglycerol (PG). CL is a key phospholipid in mitochondrial membranes and plays important roles in maintaining the functional integrity and dynamics of mitochondria under both optimal and stress conditions. In terms of biological role, activity is dispensable for viability. In Schizosaccharomyces pombe (strain 972 / ATCC 24843) (Fission yeast), this protein is Cardiolipin synthase (CMP-forming) / mitochondrial hydrolase fusion protein.